The chain runs to 148 residues: Transcriptional regulator MraZ (148 aa).

SpoVT-AbrB domains lie at 5–53 (ETAI…VEKE) and 82–125 (SALL…SEQA).

The protein belongs to the MraZ family. Forms oligomers.

The protein localises to the cytoplasm. It is found in the nucleoid. The sequence is that of Transcriptional regulator MraZ from Xylella fastidiosa (strain Temecula1 / ATCC 700964).